The primary structure comprises 80 residues: uncharacterized protein (80 aa).

Positions 1–23 (MKWNNMLKAAGIAVLLFSVFAYA) are cleaved as a signal peptide.

This is an uncharacterized protein from Bacillus subtilis (strain 168).